Here is a 143-residue protein sequence, read N- to C-terminus: Hemoglobin subunit alpha-2 (143 aa).

Serine 2 carries the post-translational modification N-acetylserine. A Globin domain is found at 2 to 143 (SLSSKDKATV…LALALSEKYR (142 aa)). Histidine 60 contacts O2. Histidine 89 is a heme b binding site.

It belongs to the globin family. As to quaternary structure, hb 2 is a heterotetramer of two alpha-2 and two beta-1 chains. Hb 3 is a heterotetramer of two alpha-2 and two beta-2 chains. Red blood cells.

In terms of biological role, involved in oxygen transport from gills to the various peripheral tissues. In Arctogadus glacialis (Arctic cod), this protein is Hemoglobin subunit alpha-2 (hba2).